The sequence spans 97 residues: Co-chaperonin GroES (97 aa).

The protein belongs to the GroES chaperonin family. Heptamer of 7 subunits arranged in a ring. Interacts with the chaperonin GroEL.

The protein localises to the cytoplasm. Together with the chaperonin GroEL, plays an essential role in assisting protein folding. The GroEL-GroES system forms a nano-cage that allows encapsulation of the non-native substrate proteins and provides a physical environment optimized to promote and accelerate protein folding. GroES binds to the apical surface of the GroEL ring, thereby capping the opening of the GroEL channel. The sequence is that of Co-chaperonin GroES from Stutzerimonas stutzeri (Pseudomonas stutzeri).